A 404-amino-acid polypeptide reads, in one-letter code: Transcriptional repressor OPI1 (404 aa).

Residue serine 10 is modified to Phosphoserine. Residues 25–51 (QSCRQKSQPSEDVSQADKMPASESSTT) are disordered. The span at 26–37 (SCRQKSQPSEDV) shows a compositional bias: polar residues. The tract at residues 109-138 (KRQKLSRAIAKGKDNLKEYKLNMSIESKKR) is basic motif. Residues 139–160 (LVTCLHLLKLANKQLSDKISCL) form a leucine-zipper region. Disordered regions lie at residues 170–201 (HPLH…DEEF), 305–327 (LQQQ…SSVT), and 378–404 (QQQQ…DSKD). Residues 186-201 (GEDETSSDEDDDDEEF) are compositionally biased toward acidic residues. An FFAT motif is present at residues 200-206 (EFFDASE). Over residues 378 to 387 (QQQQYRQQQQ) the composition is skewed to low complexity. A compositionally biased stretch (polar residues) spans 394–404 (KPSQDNVDSKD).

In terms of assembly, interacts with SCS2.

It localises to the endoplasmic reticulum. It is found in the nucleus. Its function is as follows. Negative regulator of the transcriptional complex INO2-INO4 in response to phospholipid precursor availability. When precursors become limiting, OPI1 is retained at the endoplasmic reticulum (ER) and INO2-INO4 activates INO1 and other genes required for phospholipid biosynthesis, whereas abundant precursor availability results in targeting of OPI1 to the nucleus to repress transcription of these genes. Binds directly to phosphatidic acid, which is required for ER targeting and may act as sensing mechanism for precursor availability, as phosphatidic acid becomes rapidly depleted upon phospholipid biosynthesis. The sequence is that of Transcriptional repressor OPI1 (OPI1) from Saccharomyces cerevisiae (strain ATCC 204508 / S288c) (Baker's yeast).